The sequence spans 131 residues: uncharacterized protein (131 aa).

A run of 3 helical transmembrane segments spans residues 13–35, 60–79, and 100–119; these read RFIK…TFPI, LVAL…TYVC, and LFEI…WNIT.

Its subcellular location is the membrane. This is an uncharacterized protein from Saccharomyces cerevisiae (strain ATCC 204508 / S288c) (Baker's yeast).